The primary structure comprises 298 residues: UDP-N-acetylenolpyruvoylglucosamine reductase (298 aa).

Residues 27–206 (VGGPAQRLYR…QQQIRRLLRQ (180 aa)) form the FAD-binding PCMH-type domain. The active site involves Arg-171. Catalysis depends on Ser-220, which acts as the Proton donor. Glu-290 is a catalytic residue.

This sequence belongs to the MurB family. Requires FAD as cofactor.

It is found in the cytoplasm. The catalysed reaction is UDP-N-acetyl-alpha-D-muramate + NADP(+) = UDP-N-acetyl-3-O-(1-carboxyvinyl)-alpha-D-glucosamine + NADPH + H(+). It participates in cell wall biogenesis; peptidoglycan biosynthesis. Cell wall formation. This is UDP-N-acetylenolpyruvoylglucosamine reductase from Nitrosococcus oceani (strain ATCC 19707 / BCRC 17464 / JCM 30415 / NCIMB 11848 / C-107).